The following is a 233-amino-acid chain: Lipoprotein-releasing system ATP-binding protein LolD (233 aa).

Residues 6-233 (LQCDNLCKRY…TAELSLMGAE (228 aa)) enclose the ABC transporter domain. Residue 42–49 (GSSGSGKS) coordinates ATP.

Belongs to the ABC transporter superfamily. Lipoprotein translocase (TC 3.A.1.125) family. In terms of assembly, the complex is composed of two ATP-binding proteins (LolD) and two transmembrane proteins (LolC and LolE).

It localises to the cell inner membrane. Its function is as follows. Part of the ABC transporter complex LolCDE involved in the translocation of mature outer membrane-directed lipoproteins, from the inner membrane to the periplasmic chaperone, LolA. Responsible for the formation of the LolA-lipoprotein complex in an ATP-dependent manner. This is Lipoprotein-releasing system ATP-binding protein LolD from Salmonella choleraesuis (strain SC-B67).